A 226-amino-acid polypeptide reads, in one-letter code: Enolase-phosphatase E1 (226 aa).

Belongs to the HAD-like hydrolase superfamily. MasA/MtnC family. Monomer. Mg(2+) serves as cofactor.

The catalysed reaction is 5-methylsulfanyl-2,3-dioxopentyl phosphate + H2O = 1,2-dihydroxy-5-(methylsulfanyl)pent-1-en-3-one + phosphate. The protein operates within amino-acid biosynthesis; L-methionine biosynthesis via salvage pathway; L-methionine from S-methyl-5-thio-alpha-D-ribose 1-phosphate: step 3/6. It participates in amino-acid biosynthesis; L-methionine biosynthesis via salvage pathway; L-methionine from S-methyl-5-thio-alpha-D-ribose 1-phosphate: step 4/6. Functionally, bifunctional enzyme that catalyzes the enolization of 2,3-diketo-5-methylthiopentyl-1-phosphate (DK-MTP-1-P) into the intermediate 2-hydroxy-3-keto-5-methylthiopentenyl-1-phosphate (HK-MTPenyl-1-P), which is then dephosphorylated to form the acireductone 1,2-dihydroxy-3-keto-5-methylthiopentene (DHK-MTPene). This Shewanella amazonensis (strain ATCC BAA-1098 / SB2B) protein is Enolase-phosphatase E1.